Here is a 267-residue protein sequence, read N- to C-terminus: Hydroxynaphthalene reductase-like protein Arp2 (267 aa).

Positions 25, 45, 71, and 98 each coordinate NADP(+). Catalysis depends on proton donor residues S147 and S148. NADP(+) is bound by residues Y162, K166, V195, and T197. Y162 (proton acceptor) is an active-site residue. Catalysis depends on K166, which acts as the Lowers pKa of active site Tyr.

Belongs to the short-chain dehydrogenases/reductases (SDR) family.

Hydroxynaphthalene reductase-like protein; part of the Pks2 gene cluster that mediates the formation of infectious structures (appressoria), enabling these fungi to kill insects faster. The product of the Pks2 gene cluster is different from the one of Pks1 and has still not been identified. This Metarhizium anisopliae (strain ARSEF 549) protein is Hydroxynaphthalene reductase-like protein Arp2.